The primary structure comprises 267 residues: 2-keto-3-deoxy-L-rhamnonate aldolase (267 aa).

The active-site Proton acceptor is the H49. Q151 serves as a coordination point for substrate. E153 is a Mg(2+) binding site. 2 residues coordinate substrate: A178 and D179. D179 contacts Mg(2+).

Belongs to the HpcH/HpaI aldolase family. KDR aldolase subfamily. In terms of assembly, homohexamer. Mg(2+) is required as a cofactor.

The catalysed reaction is 2-dehydro-3-deoxy-L-rhamnonate = (S)-lactaldehyde + pyruvate. Functionally, catalyzes the reversible retro-aldol cleavage of 2-keto-3-deoxy-L-rhamnonate (KDR) to pyruvate and lactaldehyde. The chain is 2-keto-3-deoxy-L-rhamnonate aldolase from Escherichia coli O6:K15:H31 (strain 536 / UPEC).